The primary structure comprises 279 residues: Pantothenate synthetase (279 aa).

27-34 (MGYLHEGH) provides a ligand contact to ATP. The active-site Proton donor is the His-34. Gln-58 is a binding site for (R)-pantoate. Gln-58 is a binding site for beta-alanine. Position 144 to 147 (144 to 147 (GKKD)) interacts with ATP. Residue Gln-150 coordinates (R)-pantoate. ATP is bound by residues Val-173 and 181–184 (MSSR).

It belongs to the pantothenate synthetase family. In terms of assembly, homodimer.

It localises to the cytoplasm. It carries out the reaction (R)-pantoate + beta-alanine + ATP = (R)-pantothenate + AMP + diphosphate + H(+). Its pathway is cofactor biosynthesis; (R)-pantothenate biosynthesis; (R)-pantothenate from (R)-pantoate and beta-alanine: step 1/1. In terms of biological role, catalyzes the condensation of pantoate with beta-alanine in an ATP-dependent reaction via a pantoyl-adenylate intermediate. This chain is Pantothenate synthetase, found in Citrifermentans bemidjiense (strain ATCC BAA-1014 / DSM 16622 / JCM 12645 / Bem) (Geobacter bemidjiensis).